A 167-amino-acid chain; its full sequence is NADH-quinone oxidoreductase subunit B (167 aa).

The [4Fe-4S] cluster site is built by cysteine 40, cysteine 41, cysteine 105, and cysteine 134.

Belongs to the complex I 20 kDa subunit family. As to quaternary structure, NDH-1 is composed of 14 different subunits. Subunits NuoB, C, D, E, F, and G constitute the peripheral sector of the complex. It depends on [4Fe-4S] cluster as a cofactor.

It localises to the cell inner membrane. It carries out the reaction a quinone + NADH + 5 H(+)(in) = a quinol + NAD(+) + 4 H(+)(out). In terms of biological role, NDH-1 shuttles electrons from NADH, via FMN and iron-sulfur (Fe-S) centers, to quinones in the respiratory chain. The immediate electron acceptor for the enzyme in this species is believed to be ubiquinone. Couples the redox reaction to proton translocation (for every two electrons transferred, four hydrogen ions are translocated across the cytoplasmic membrane), and thus conserves the redox energy in a proton gradient. The sequence is that of NADH-quinone oxidoreductase subunit B from Campylobacter jejuni subsp. jejuni serotype O:6 (strain 81116 / NCTC 11828).